Here is a 137-residue protein sequence, read N- to C-terminus: 1,4-dihydroxy-2-naphthoyl-CoA hydrolase (137 aa).

Residue aspartate 12 is part of the active site.

The protein belongs to the 4-hydroxybenzoyl-CoA thioesterase family. DHNA-CoA hydrolase subfamily.

It carries out the reaction 1,4-dihydroxy-2-naphthoyl-CoA + H2O = 1,4-dihydroxy-2-naphthoate + CoA + H(+). The protein operates within cofactor biosynthesis; phylloquinone biosynthesis. It functions in the pathway quinol/quinone metabolism; 1,4-dihydroxy-2-naphthoate biosynthesis; 1,4-dihydroxy-2-naphthoate from chorismate: step 7/7. In terms of biological role, catalyzes the hydrolysis of 1,4-dihydroxy-2-naphthoyl-CoA (DHNA-CoA) to 1,4-dihydroxy-2-naphthoate (DHNA), a reaction involved in phylloquinone (vitamin K1) biosynthesis. In Acaryochloris marina (strain MBIC 11017), this protein is 1,4-dihydroxy-2-naphthoyl-CoA hydrolase.